Reading from the N-terminus, the 145-residue chain is D-aminoacyl-tRNA deacylase (145 aa).

Residues 137-138 carry the Gly-cisPro motif, important for rejection of L-amino acids motif; sequence GP.

It belongs to the DTD family. As to quaternary structure, homodimer.

It localises to the cytoplasm. The enzyme catalyses glycyl-tRNA(Ala) + H2O = tRNA(Ala) + glycine + H(+). It catalyses the reaction a D-aminoacyl-tRNA + H2O = a tRNA + a D-alpha-amino acid + H(+). Its function is as follows. An aminoacyl-tRNA editing enzyme that deacylates mischarged D-aminoacyl-tRNAs. Also deacylates mischarged glycyl-tRNA(Ala), protecting cells against glycine mischarging by AlaRS. Acts via tRNA-based rather than protein-based catalysis; rejects L-amino acids rather than detecting D-amino acids in the active site. By recycling D-aminoacyl-tRNA to D-amino acids and free tRNA molecules, this enzyme counteracts the toxicity associated with the formation of D-aminoacyl-tRNA entities in vivo and helps enforce protein L-homochirality. In Brevibacillus brevis (strain 47 / JCM 6285 / NBRC 100599), this protein is D-aminoacyl-tRNA deacylase.